We begin with the raw amino-acid sequence, 326 residues long: Tagatose 1,6-diphosphate aldolase (326 aa).

It belongs to the aldolase LacD family.

It catalyses the reaction D-tagatofuranose 1,6-bisphosphate = D-glyceraldehyde 3-phosphate + dihydroxyacetone phosphate. It functions in the pathway carbohydrate metabolism; D-tagatose 6-phosphate degradation; D-glyceraldehyde 3-phosphate and glycerone phosphate from D-tagatose 6-phosphate: step 2/2. In Staphylococcus aureus (strain bovine RF122 / ET3-1), this protein is Tagatose 1,6-diphosphate aldolase.